Consider the following 193-residue polypeptide: Oligoribonuclease (193 aa).

The Exonuclease domain maps to 20–183 (FVWLDCEMTG…ADVHESIEEL (164 aa)). The active site involves Tyr141.

Belongs to the oligoribonuclease family.

Its subcellular location is the cytoplasm. Its function is as follows. 3'-to-5' exoribonuclease specific for small oligoribonucleotides. This is Oligoribonuclease from Paracidovorax citrulli (strain AAC00-1) (Acidovorax citrulli).